Consider the following 431-residue polypeptide: Glucose-1-phosphate adenylyltransferase (431 aa).

K39 contacts beta-D-fructose 1,6-bisphosphate. Residues R40, H46, and R52 each contribute to the AMP site. Y114 provides a ligand contact to alpha-D-glucose 1-phosphate. R130 is a binding site for AMP. Alpha-D-glucose 1-phosphate-binding positions include G179, 194–195 (EK), and S212. E370 and R386 together coordinate AMP. Residues 419–423 (REMLR) and 429–431 (QER) each bind beta-D-fructose 1,6-bisphosphate.

This sequence belongs to the bacterial/plant glucose-1-phosphate adenylyltransferase family. Homotetramer.

The enzyme catalyses alpha-D-glucose 1-phosphate + ATP + H(+) = ADP-alpha-D-glucose + diphosphate. The protein operates within glycan biosynthesis; glycogen biosynthesis. With respect to regulation, allosterically activated by fructose-1,6-bisphosphate (F16BP) and inhibited by AMP. In terms of biological role, involved in the biosynthesis of ADP-glucose, a building block required for the elongation reactions to produce glycogen. Catalyzes the reaction between ATP and alpha-D-glucose 1-phosphate (G1P) to produce pyrophosphate and ADP-Glc. The sequence is that of Glucose-1-phosphate adenylyltransferase from Salmonella dublin (strain CT_02021853).